A 190-amino-acid polypeptide reads, in one-letter code: Transcription factor E (190 aa).

Positions 4 to 87 (KNKALLEIAK…YWHLETKRLP (84 aa)) constitute an HTH TFE/IIEalpha-type domain. The tract at residues 170–190 (PSPKKEKKKTRAKAKRKTRKK) is disordered. Residues 174 to 190 (KEKKKTRAKAKRKTRKK) show a composition bias toward basic residues.

This sequence belongs to the TFE family. Monomer. Interaction with RNA polymerase subunits RpoF and RpoE is necessary for Tfe stimulatory transcription activity. Able to interact with Tbp and RNA polymerase in the absence of DNA promoter. Interacts both with the preinitiation and elongation complexes.

Functionally, transcription factor that plays a role in the activation of archaeal genes transcribed by RNA polymerase. Facilitates transcription initiation by enhancing TATA-box recognition by TATA-box-binding protein (Tbp), and transcription factor B (Tfb) and RNA polymerase recruitment. Not absolutely required for transcription in vitro, but particularly important in cases where Tbp or Tfb function is not optimal. It dynamically alters the nucleic acid-binding properties of RNA polymerases by stabilizing the initiation complex and destabilizing elongation complexes. Seems to translocate with the RNA polymerase following initiation and acts by binding to the non template strand of the transcription bubble in elongation complexes. The sequence is that of Transcription factor E from Pyrococcus abyssi (strain GE5 / Orsay).